The primary structure comprises 81 residues: UPF0248 protein TK0315 (81 aa).

The protein belongs to the UPF0248 family.

The chain is UPF0248 protein TK0315 from Thermococcus kodakarensis (strain ATCC BAA-918 / JCM 12380 / KOD1) (Pyrococcus kodakaraensis (strain KOD1)).